The chain runs to 37 residues: Desulforedoxin (37 aa).

Cys10, Cys13, Cys29, and Cys30 together coordinate Fe cation.

The protein to the N-terminal section of desulfoferrodoxin. As to quaternary structure, homodimer. It depends on Fe cation as a cofactor.

Nonheme iron protein possibly involved in electron transport. In Megalodesulfovibrio gigas (Desulfovibrio gigas), this protein is Desulforedoxin (dsr).